The following is a 436-amino-acid chain: MNYLSPAKIDSLFSAQKAYFATRATADVGFRKQSLERLKEAVINNKEALYSALAEDLGKPKDVVDLAEIGAVLHEIDFALAHLDEWVAPVSVPSPDIIAPSECYVVQEPYGVTYIIGPFNYPVNLTLTPLIGAIIGGNTCIIKPSETTPETSAVIEKIIAEAFAPEYVAVIQGGRDENSHLLSLPFDFIFFTGSPNVGKVVMQAAAKHLTPVVLELGGKCPLIVLPDADLDQTVNQLMFGKFINSGQTCIAPDYLYVHYSVKDALLERLVERVKTELPEINSTGKLVTERQVQRLVSLLEATQGQVLVGSQADVSKRALSATVVDGVEWNDPLMSEELFGPILPVLEFDSVRTAIDQVNKHHPKPLAVYVFGKDMDVAKGIINQIQSGDAQVNGVMLHAFSPYLPFGGIGASGMGEYHGHFSYLTFTHKKSVRIVP.

Residues 117–119, 143–147, 175–178, 193–194, 215–216, cysteine 249, and 337–339 contribute to the NADP(+) site; these read GPF, KPSET, RDEN, GS, EL, and ELF. Residues glutamate 215 and cysteine 249 contribute to the active site.

The protein belongs to the aldehyde dehydrogenase family.

The enzyme catalyses benzaldehyde + NAD(+) + H2O = benzoate + NADH + 2 H(+). It catalyses the reaction benzaldehyde + NADP(+) + H2O = benzoate + NADPH + 2 H(+). The protein operates within aromatic compound metabolism; (R)-mandelate degradation; benzoate from (R)-mandelate: step 4/4. In terms of biological role, NAD or NADP-dependent benzaldehyde dehydrogenase that catalyzes the conversion of benzaldehyde into benzoate in the (R)-mandelate degradation pathway. The chain is NAD(P)-dependent benzaldehyde dehydrogenase (mdlD) from Pseudomonas putida (Arthrobacter siderocapsulatus).